The chain runs to 102 residues: NADH-quinone oxidoreductase subunit K (102 aa).

3 helical membrane-spanning segments follow: residues 5–25, 31–51, and 62–82; these read LAHYLVLGAILFAIGIFGIFL, IILLMSIELVLLAVNMNFVAF, and VFVFFILTVAAAEAAIGLAIL.

This sequence belongs to the complex I subunit 4L family. As to quaternary structure, NDH-1 is composed of 14 different subunits. Subunits NuoA, H, J, K, L, M, N constitute the membrane sector of the complex.

It localises to the cell inner membrane. The catalysed reaction is a quinone + NADH + 5 H(+)(in) = a quinol + NAD(+) + 4 H(+)(out). Its function is as follows. NDH-1 shuttles electrons from NADH, via FMN and iron-sulfur (Fe-S) centers, to quinones in the respiratory chain. The immediate electron acceptor for the enzyme in this species is believed to be ubiquinone. Couples the redox reaction to proton translocation (for every two electrons transferred, four hydrogen ions are translocated across the cytoplasmic membrane), and thus conserves the redox energy in a proton gradient. In Bordetella petrii (strain ATCC BAA-461 / DSM 12804 / CCUG 43448), this protein is NADH-quinone oxidoreductase subunit K.